The chain runs to 894 residues: Septin and tuftelin-interacting protein 1 homolog (894 aa).

Disordered regions lie at residues 71-149 (YEPN…DKPV) and 187-225 (NAGL…RSLG). Over residues 73–84 (PNEHKLKNKDGE) the composition is skewed to basic and acidic residues. Residues 97–126 (KKKKKEKKEKKQKKKEKKEKKEKKNKKKNK) show a composition bias toward basic residues. One can recognise a G-patch domain in the interval 149-195 (VGGIGAALLSKMGYKGTGGLGRDGGGMVEPIKVQVRPKNAGLASVTE). Residues 202 to 217 (DDSDDSDQSEGDTDSD) are compositionally biased toward acidic residues. A coiled-coil region spans residues 329 to 449 (KQIDIQNQDN…SDNNDNSSLE (121 aa)). The disordered stretch occupies residues 785-821 (NNNNNNNINNSYQQQNQQQPIKPISSPSLNSSNNNNI).

The protein belongs to the TFP11/STIP family. As to quaternary structure, identified in the spliceosome C complex.

It localises to the cytoplasm. Its subcellular location is the nucleus. May be involved in pre-mRNA splicing. This Dictyostelium discoideum (Social amoeba) protein is Septin and tuftelin-interacting protein 1 homolog (stip-1).